Consider the following 121-residue polypeptide: MSITKDQIIEGVAALSVMEIVELIAAMEEKFGVSAAAVAAGPAAAAEAVEEKTEFDVVLKGIGANKVAVIKAVRGATGLGLKEAKDLVESAPAALKEGISKDDAEALKKALEEAGAEVEVK.

Belongs to the bacterial ribosomal protein bL12 family. Homodimer. Part of the ribosomal stalk of the 50S ribosomal subunit. Forms a multimeric L10(L12)X complex, where L10 forms an elongated spine to which 2 to 4 L12 dimers bind in a sequential fashion. Binds GTP-bound translation factors.

Its function is as follows. Forms part of the ribosomal stalk which helps the ribosome interact with GTP-bound translation factors. Is thus essential for accurate translation. The protein is Large ribosomal subunit protein bL12 of Serratia proteamaculans (strain 568).